The primary structure comprises 204 residues: MTTVINRKYRISRRLGINLWGRAKDPVNRRKYPPGQRGILGFKRLSDFGKQFAAHKKFKFYYAISSKQLRRIFLDAYNRKGYTADNFIGILESRLSSVLYHSGLVPTIYSAKQLISHKHVTVNDKIVNIPSYRVKPGDIVKIRERAAKIPVIVEAVQKQERKAPDYLEADSKEYSVKYLRIPQYSEVPYSADMEVNLVVEFYSR.

One can recognise an S4 RNA-binding domain in the interval 93–156 (SRLSSVLYHS…AKIPVIVEAV (64 aa)).

Belongs to the universal ribosomal protein uS4 family. Part of the 30S ribosomal subunit. Contacts protein S5. The interaction surface between S4 and S5 is involved in control of translational fidelity.

Functionally, one of the primary rRNA binding proteins, it binds directly to 16S rRNA where it nucleates assembly of the body of the 30S subunit. In terms of biological role, with S5 and S12 plays an important role in translational accuracy. In Wolbachia sp. subsp. Brugia malayi (strain TRS), this protein is Small ribosomal subunit protein uS4.